The sequence spans 259 residues: GTP cyclohydrolase FolE2 (259 aa).

Belongs to the GTP cyclohydrolase IV family.

It carries out the reaction GTP + H2O = 7,8-dihydroneopterin 3'-triphosphate + formate + H(+). Its pathway is cofactor biosynthesis; 7,8-dihydroneopterin triphosphate biosynthesis; 7,8-dihydroneopterin triphosphate from GTP: step 1/1. Functionally, converts GTP to 7,8-dihydroneopterin triphosphate. The protein is GTP cyclohydrolase FolE2 of Thermotoga petrophila (strain ATCC BAA-488 / DSM 13995 / JCM 10881 / RKU-1).